The sequence spans 421 residues: MYQKIKGTEDLYGDEMKYWYWIEKKAKDLAIRYGYGEIRTPIFEETKLFIRSVGQDTDIVQKEMYTFEDKGGRSITLRPEGTAPVVRAFVEDGMIAQGFPQKYFYIGPMFRYERPQSGRQRQFHQFGAEIFGSSSAIADAELIIFADRLMKEIGLVDYQIHINSLGDIEDRVKYREALKEYYAQHLENLCDDCKVRYEKNVLRLLDCKVDIEYTKNAPKITDYLGENSRKHYEELKALLDSVGIKYIENPRLVRGLDYYNRTVFEIHHQKLGAMSAIAGGGRYDGLIKEIGGKDVPALGFATGIERLILALKAENVLVDEIETNVVYIAYLGGFDVKAEAIRLSEELRREGIPVGLELMERGLSAQLKNAARVGAKFTIIVGESELERNIVLVKNMETGEQLEFERSFVVSGIKDMITEMQ.

Belongs to the class-II aminoacyl-tRNA synthetase family. As to quaternary structure, homodimer.

The protein resides in the cytoplasm. The catalysed reaction is tRNA(His) + L-histidine + ATP = L-histidyl-tRNA(His) + AMP + diphosphate + H(+). This chain is Histidine--tRNA ligase, found in Fervidobacterium nodosum (strain ATCC 35602 / DSM 5306 / Rt17-B1).